Here is a 220-residue protein sequence, read N- to C-terminus: Protein US2 homolog (220 aa).

This sequence belongs to the herpesviridae US2 family.

This chain is Protein US2 homolog, found in Bovine herpesvirus 1.2 (strain ST) (BoHV-1).